The chain runs to 66 residues: Alpha-conotoxin-like Tx2 (66 aa).

Residues 1 to 21 (MGMRMMFTVFLLVVLATTVVS) form the signal peptide. Residues 22–49 (FTSGRRTFHGRNAAAKASGLVSLTDRRP) constitute a propeptide that is removed on maturation. Disulfide bonds link Cys51-Cys57 and Cys52-Cys65. A ser-Xaa-Pro motif, crucial for potent interaction with nAChR region spans residues 53-55 (SHP).

The protein belongs to the conotoxin A superfamily. Expressed by the venom duct.

Its subcellular location is the secreted. Its function is as follows. Alpha-conotoxins act on postsynaptic membranes, they bind to the nicotinic acetylcholine receptors (nAChR) and thus inhibit them. This is Alpha-conotoxin-like Tx2 from Conus textile (Cloth-of-gold cone).